Consider the following 189-residue polypeptide: Insecticyanin-A (189 aa).

Intrachain disulfides connect C9–C119 and C43–C175.

The protein belongs to the calycin superfamily. Lipocalin family. Homotetramer. In terms of tissue distribution, synthesized only in the caterpillars, apparently by the epidermis and secreted into the hemolymph. The protein is passed over from the larval hemolymph to that of pupae and adults and is sequestered in the eggs.

It is found in the secreted. This protein binds a chromophore: biliverdin IX, isomer gamma. Mixed with lipoprotein-bound carotenes, this blue protein provides hornworms with their green cryptic coloration which serves a camouflage. In Manduca sexta (Tobacco hawkmoth), this protein is Insecticyanin-A (INSA).